The following is a 206-amino-acid chain: MLQEVVYCGICSYPPEYCEFSGKLKRCKVWLSENDTELYAKLYGNEIDEEVANAANKLGSSSIGEAREEKLEKDLLRLQAKQENREQRELAKKLSSKVVIKREARTKRKFIVAISGLEVFEIDMKKLAKTFASKFATGCSVSKNAEKKDEIVIQGDVLEEVEKYIHSLLEEKGLKNVKLEIIDSQKKKKKPTDEANSNNNNNNNNK.

One can recognise an SUI1 domain in the interval Val98–Leu169. The segment at Ser184–Lys206 is disordered. A compositionally biased stretch (low complexity) spans Asn196–Lys206.

It belongs to the DENR family. Interacts with the 40S ribosomal subunit.

Its subcellular location is the cytoplasm. This Vanderwaltozyma polyspora (strain ATCC 22028 / DSM 70294 / BCRC 21397 / CBS 2163 / NBRC 10782 / NRRL Y-8283 / UCD 57-17) (Kluyveromyces polysporus) protein is Translation machinery-associated protein 22 (TMA22).